A 225-amino-acid chain; its full sequence is Cytidylate kinase (225 aa).

12–20 (GPSGAGKGT) lines the ATP pocket.

This sequence belongs to the cytidylate kinase family. Type 1 subfamily.

It localises to the cytoplasm. The enzyme catalyses CMP + ATP = CDP + ADP. The catalysed reaction is dCMP + ATP = dCDP + ADP. The sequence is that of Cytidylate kinase from Stenotrophomonas maltophilia (strain K279a).